The sequence spans 308 residues: tRNA pseudouridine synthase B (308 aa).

Asp-49 functions as the Nucleophile in the catalytic mechanism.

It belongs to the pseudouridine synthase TruB family. Type 1 subfamily.

It carries out the reaction uridine(55) in tRNA = pseudouridine(55) in tRNA. Its function is as follows. Responsible for synthesis of pseudouridine from uracil-55 in the psi GC loop of transfer RNAs. In Corynebacterium jeikeium (strain K411), this protein is tRNA pseudouridine synthase B.